Consider the following 171-residue polypeptide: Putative lipoprotein LppO (171 aa).

The signal sequence occupies residues 1-28 (MTDPRHTVRIAVGATALGVSALGATLPA). Residue Cys-29 is the site of N-palmitoyl cysteine attachment. Cys-29 is lipidated: S-diacylglycerol cysteine.

It localises to the cell membrane. In Mycobacterium tuberculosis (strain CDC 1551 / Oshkosh), this protein is Putative lipoprotein LppO (lppO).